The primary structure comprises 160 residues: Endoribonuclease YbeY (160 aa).

Residues H121, H125, and H131 each contribute to the Zn(2+) site.

Belongs to the endoribonuclease YbeY family. The cofactor is Zn(2+).

It is found in the cytoplasm. In terms of biological role, single strand-specific metallo-endoribonuclease involved in late-stage 70S ribosome quality control and in maturation of the 3' terminus of the 16S rRNA. The polypeptide is Endoribonuclease YbeY (Hydrogenovibrio crunogenus (strain DSM 25203 / XCL-2) (Thiomicrospira crunogena)).